Consider the following 388-residue polypeptide: Cytochrome b (388 aa).

The next 4 membrane-spanning stretches (helical) occupy residues 32–52 (FGSL…TLAM), 76–98 (WLIR…LHVG), 113–133 (TWTI…LGYV), and 179–199 (FFAL…MHLI). Residues H82 and H96 each contribute to the heme b site. Heme b is bound by residues H183 and H197. Position 202 (H202) interacts with a ubiquinone. 4 helical membrane-spanning segments follow: residues 226–246 (FIFK…IFIF), 290–310 (LLGV…PITD), 322–342 (LSKI…QLGA), and 349–369 (FIEF…IIVP).

It belongs to the cytochrome b family. Fungal cytochrome b-c1 complex contains 10 subunits; 3 respiratory subunits, 2 core proteins and 5 low-molecular weight proteins. Cytochrome b-c1 complex is a homodimer. Requires heme b as cofactor.

The protein localises to the mitochondrion inner membrane. In terms of biological role, component of the ubiquinol-cytochrome c reductase complex (complex III or cytochrome b-c1 complex) that is part of the mitochondrial respiratory chain. The b-c1 complex mediates electron transfer from ubiquinol to cytochrome c. Contributes to the generation of a proton gradient across the mitochondrial membrane that is then used for ATP synthesis. This chain is Cytochrome b (cob), found in Zymoseptoria tritici (Speckled leaf blotch fungus).